The following is a 270-amino-acid chain: High choriolytic enzyme 1 (270 aa).

Residues 1–20 (MNLAPSTCLLLLFLLDIAQA) form the signal peptide. Residues 21–70 (LPVWDEEGHEEGHEEGDGDDFVDITTRILTSNNNTDQLLLEGDLVAPTNR) constitute a propeptide, activation peptide. Asn-53 carries an N-linked (GlcNAc...) asparagine glycan. Residues 71–270 (NAMKCWSSSC…TRINVLYNCR (200 aa)) form the Peptidase M12A domain. 3 cysteine pairs are disulfide-bonded: Cys-75/Cys-80, Cys-120/Cys-269, and Cys-141/Cys-161. His-169 serves as a coordination point for Zn(2+). Glu-170 is an active-site residue. Positions 173 and 179 each coordinate Zn(2+).

Zn(2+) is required as a cofactor.

It localises to the zymogen granule. The catalysed reaction is Hydrolysis of the inner layer of fish egg envelope. Also hydrolysis of casein and small molecule substrates such as succinyl-Leu-Leu-Val-Tyr-|-7-(4-methyl)coumarylamide.. Functionally, participates in the breakdown of the egg envelope, which is derived from the egg extracellular matrix, at the time of hatching. Thus allowing the newly hatched fish to swim free. HCE binds tightly to the egg envelope while it exerts the choriolytic swelling action. The sequence is that of High choriolytic enzyme 1 (hcea) from Oryzias latipes (Japanese rice fish).